The primary structure comprises 507 residues: MAVATLISILFAVLALRLCYLLIHALFLSPLRHIPAPFMARVTSKRPLWHLLTGKAEIAARQDYSTFGDIYLCKPNTVYLCDPHDACTVLSSHAFRKTDMYRVFEYEGIPNVSTFTDPAQAQRRRRQLHPFFNNAYLTQMEPVMLKYGIQALKARWDAQLARHKKVEVNYRFDTQLAMFDITGALVFGREFHALETSNLVYTKWVNNTLSYMLVSHYFPWVKRVPLSWLVRGLKQSYDDLVAFSQESIAIRQADLQAGRPKPADLLQALLDAEDPDSKAPMTAREVQAESIAMLVGGSESTSSVISWVIHFLLLYPEHLQAVVAETRANFPADHTITFNESKANLPYLEACIYETLRCIPTASTSFPRVSDQAIILKGYYIPAGTEIATNKCAAHLHQPSWQDPDRFYPPRFLNQETYHETRRNMLSFAYGTRFCIGRNLAWAVMMVTLANLFKDYEVELPEDSRFGPTIVDAAGRPKIMPTKMGVATMPADPERDCRMVLSVRITE.

The N-terminal stretch at 1-25 (MAVATLISILFAVLALRLCYLLIHA) is a signal peptide. Asparagine 111, asparagine 206, and asparagine 339 each carry an N-linked (GlcNAc...) asparagine glycan. Residue cysteine 435 coordinates heme.

The protein belongs to the cytochrome P450 family. Heme is required as a cofactor.

Its pathway is mycotoxin biosynthesis. Functionally, cytochrome P450 monooxygenase; part of the gene cluster that mediates the biosynthesis of helvolic acid, an antibacterial nortriterpenoid. Protostadienol synthase helA cyclizes (3S)-oxidosqualene to (17Z)-protosta-17(20),24-dien-3-beta-ol (protostadienol). The synthesis of protostadienol is followed by several steps of monooxygenation, dehydrogenation, and acyl transfer to yield the final helvolic acid. Following the cyclization to the tetracyclic protostadienol by helA, cytochrome P450 monooxygenases helB1-mediated and helB2-mediated oxidation at C-4 and C-16, acyltransferase helD2-dependent acetylation of 16-OH, oxidation of C-21 by cytochrome P450 monooxygenase helB4, and short chain dehydrogenase helC-dependent oxidative decarboxylation yield the fusidane skeleton. This intermediate is further modified in three additional steps mediated by the cytochrome P450 monooxygenase helB3, the acyltransferase helD1, and the 3-ketosteroid 1-dehydrogenase helE to give helvolic acid. Compared with the late stages in the biosynthesis of helvolic acid, enzymes involved in the early stage modifications act in a relatively strict order. The hydroxylation of C-16 by helB1 and subsequent acetylation by helD2 should occur before the helB3-mediated oxidation of C-21. C-4 demethylation in fusidane-type antibiotics proceeds in an unusual manner though it is also achieved by oxidative decarboxylation. The methyl group at C-4 beta position is oxidized by helB1 and subsequently removed by the short chain dehydrogenase helC. The sequence is that of Cytochrome P450 monooxygenase helB3 from Aspergillus fumigatus (strain ATCC MYA-4609 / CBS 101355 / FGSC A1100 / Af293) (Neosartorya fumigata).